A 314-amino-acid polypeptide reads, in one-letter code: uncharacterized protein (314 aa).

Belongs to the carbohydrate kinase PfkB family.

This is an uncharacterized protein from Buchnera aphidicola subsp. Schizaphis graminum (strain Sg).